A 481-amino-acid polypeptide reads, in one-letter code: Aspartyl/glutamyl-tRNA(Asn/Gln) amidotransferase subunit B (481 aa).

The protein belongs to the GatB/GatE family. GatB subfamily. In terms of assembly, heterotrimer of A, B and C subunits.

The enzyme catalyses L-glutamyl-tRNA(Gln) + L-glutamine + ATP + H2O = L-glutaminyl-tRNA(Gln) + L-glutamate + ADP + phosphate + H(+). It carries out the reaction L-aspartyl-tRNA(Asn) + L-glutamine + ATP + H2O = L-asparaginyl-tRNA(Asn) + L-glutamate + ADP + phosphate + 2 H(+). Its function is as follows. Allows the formation of correctly charged Asn-tRNA(Asn) or Gln-tRNA(Gln) through the transamidation of misacylated Asp-tRNA(Asn) or Glu-tRNA(Gln) in organisms which lack either or both of asparaginyl-tRNA or glutaminyl-tRNA synthetases. The reaction takes place in the presence of glutamine and ATP through an activated phospho-Asp-tRNA(Asn) or phospho-Glu-tRNA(Gln). The protein is Aspartyl/glutamyl-tRNA(Asn/Gln) amidotransferase subunit B of Pseudomonas putida (strain ATCC 47054 / DSM 6125 / CFBP 8728 / NCIMB 11950 / KT2440).